The following is a 194-amino-acid chain: dITP/XTP pyrophosphatase (194 aa).

Position 8 to 13 (8 to 13 (TKNKGK)) interacts with substrate. Positions 41 and 70 each coordinate Mg(2+). Asp70 functions as the Proton acceptor in the catalytic mechanism. Residues Ser71, 153–156 (FGYD), Lys176, and 181–182 (HR) each bind substrate.

It belongs to the HAM1 NTPase family. Homodimer. Mg(2+) serves as cofactor.

It carries out the reaction XTP + H2O = XMP + diphosphate + H(+). It catalyses the reaction dITP + H2O = dIMP + diphosphate + H(+). The catalysed reaction is ITP + H2O = IMP + diphosphate + H(+). Functionally, pyrophosphatase that catalyzes the hydrolysis of nucleoside triphosphates to their monophosphate derivatives, with a high preference for the non-canonical purine nucleotides XTP (xanthosine triphosphate), dITP (deoxyinosine triphosphate) and ITP. Seems to function as a house-cleaning enzyme that removes non-canonical purine nucleotides from the nucleotide pool, thus preventing their incorporation into DNA/RNA and avoiding chromosomal lesions. This Halalkalibacterium halodurans (strain ATCC BAA-125 / DSM 18197 / FERM 7344 / JCM 9153 / C-125) (Bacillus halodurans) protein is dITP/XTP pyrophosphatase.